Consider the following 179-residue polypeptide: Large ribosomal subunit protein uL5 (179 aa).

The protein belongs to the universal ribosomal protein uL5 family. As to quaternary structure, part of the 50S ribosomal subunit; part of the 5S rRNA/L5/L18/L25 subcomplex. Contacts the 5S rRNA and the P site tRNA. Forms a bridge to the 30S subunit in the 70S ribosome.

In terms of biological role, this is one of the proteins that bind and probably mediate the attachment of the 5S RNA into the large ribosomal subunit, where it forms part of the central protuberance. In the 70S ribosome it contacts protein S13 of the 30S subunit (bridge B1b), connecting the 2 subunits; this bridge is implicated in subunit movement. Contacts the P site tRNA; the 5S rRNA and some of its associated proteins might help stabilize positioning of ribosome-bound tRNAs. The protein is Large ribosomal subunit protein uL5 of Citrobacter koseri (strain ATCC BAA-895 / CDC 4225-83 / SGSC4696).